A 249-amino-acid polypeptide reads, in one-letter code: Caffeoyl-CoA O-methyltransferase (249 aa).

Lys21 is a binding site for substrate. S-adenosyl-L-methionine-binding positions include Thr63, Glu85, 87–88, Ser93, Asp111, and Ala140; that span reads GV. Asp162 is a substrate binding site. Asp162 is an a divalent metal cation binding site. Position 164 (Asp164) interacts with S-adenosyl-L-methionine. Residues Asp188 and Asn189 each coordinate a divalent metal cation. Asn193 contacts substrate.

This sequence belongs to the class I-like SAM-binding methyltransferase superfamily. Cation-dependent O-methyltransferase family. CCoAMT subfamily. In terms of assembly, homodimer. It depends on a divalent metal cation as a cofactor.

The enzyme catalyses (E)-caffeoyl-CoA + S-adenosyl-L-methionine = (E)-feruloyl-CoA + S-adenosyl-L-homocysteine + H(+). Its pathway is aromatic compound metabolism; phenylpropanoid biosynthesis. Its function is as follows. Methylates caffeoyl-CoA to feruloyl-CoA and 5-hydroxyferuloyl-CoA to sinapoyl-CoA. Plays a role in the synthesis of feruloylated polysaccharides. Involved in the reinforcement of the plant cell wall. Also involved in the responding to wounding or pathogen challenge by the increased formation of cell wall-bound ferulic acid polymers. This chain is Caffeoyl-CoA O-methyltransferase, found in Eucalyptus gunnii (Cider gum).